Here is a 514-residue protein sequence, read N- to C-terminus: Importin subunit alpha-3 (514 aa).

In terms of domain architecture, IBB spans 1-51 (MSSNRQAYYKNNAKEQIGKEKRNEEVVSIRKDKREEAISKRRNINTQIEDD). Residues 1-62 (MSSNRQAYYK…ETSTTPPGPF (62 aa)) are disordered. The span at 12–39 (NAKEQIGKEKRNEEVVSIRKDKREEAIS) shows a compositional bias: basic and acidic residues. 8 ARM repeats span residues 101–142 (IDDL…TSEQ), 143–187 (TQAV…FRDY), 188–226 (CLELGILQPLLQFINPEIPIGFLRNVTWVIVNLCRCKDP), 227–271 (APSP…EHIQ), 272–311 (MVIEAQVVTHLVPLLGHVDVKVQTAALRAVGNIVTGTDEQ), 312–353 (TQLV…NQQQ), 354–393 (VQDVFDAGIMPMIIHLLDRGDFPTQKEAAWAISNVTISGR), and 394–436 (PNQV…KMAG). The segment at 485–514 (GNVEGAQSSAFGGDVPPVPDAPNGGWNFGK) is disordered.

The protein belongs to the importin alpha family. As to quaternary structure, forms a complex with an importin beta subunit. May interact with transcription factor cebp-1 (via N-terminus). Interacts with cmk-1; affinity for cmk-1 is increased in the presence of Ca(2+) and calmodulin and leads to increased nuclear accumulation of cmk-1 in FLP neurons upon prolonged heat activation. In terms of tissue distribution, expressed in larval and adult germline and somatic tissues, including neurons.

It localises to the cytoplasm. The protein localises to the nucleus. In terms of biological role, binds specifically and directly to substrates containing either a simple or bipartite NLS motif. Promotes docking of import substrates to the nuclear envelope. Seems to act as a cytosolic receptor for both simple and bipartite NLS motifs. Necessary for correct nucleoporin localization within the germline. Essential gene for embryonic and larval development. May be dispensable for axon development, but required for axon regeneration in both mechanosensory and motor neurons. Required for oogenic development, ima-1 and ima-2 cannot functionally compensate for loss of ima-3. The chain is Importin subunit alpha-3 (ima-3) from Caenorhabditis elegans.